Consider the following 386-residue polypeptide: uncharacterized protein (386 aa).

At K185 the chain carries N6-(pyridoxal phosphate)lysine.

This sequence belongs to the DegT/DnrJ/EryC1 family. The cofactor is pyridoxal 5'-phosphate.

This is an uncharacterized protein from Methanocaldococcus jannaschii (strain ATCC 43067 / DSM 2661 / JAL-1 / JCM 10045 / NBRC 100440) (Methanococcus jannaschii).